The following is a 114-amino-acid chain: Large ribosomal subunit protein bL19 (114 aa).

It belongs to the bacterial ribosomal protein bL19 family.

Its function is as follows. This protein is located at the 30S-50S ribosomal subunit interface and may play a role in the structure and function of the aminoacyl-tRNA binding site. In Thermoanaerobacter sp. (strain X514), this protein is Large ribosomal subunit protein bL19.